The following is a 272-amino-acid chain: 3-methyl-2-oxobutanoate hydroxymethyltransferase (272 aa).

Mg(2+) is bound by residues aspartate 43 and aspartate 82. 3-methyl-2-oxobutanoate contacts are provided by residues aspartate 43 to serine 44, aspartate 82, and lysine 112. A Mg(2+)-binding site is contributed by glutamate 114. Catalysis depends on glutamate 179, which acts as the Proton acceptor.

It belongs to the PanB family. In terms of assembly, homodecamer; pentamer of dimers. It depends on Mg(2+) as a cofactor.

The protein resides in the cytoplasm. It catalyses the reaction 3-methyl-2-oxobutanoate + (6R)-5,10-methylene-5,6,7,8-tetrahydrofolate + H2O = 2-dehydropantoate + (6S)-5,6,7,8-tetrahydrofolate. It functions in the pathway cofactor biosynthesis; (R)-pantothenate biosynthesis; (R)-pantoate from 3-methyl-2-oxobutanoate: step 1/2. Functionally, catalyzes the reversible reaction in which hydroxymethyl group from 5,10-methylenetetrahydrofolate is transferred onto alpha-ketoisovalerate to form ketopantoate. The chain is 3-methyl-2-oxobutanoate hydroxymethyltransferase from Staphylococcus aureus (strain MRSA252).